Consider the following 105-residue polypeptide: Met repressor (105 aa).

Belongs to the MetJ family. In terms of assembly, homodimer.

The protein resides in the cytoplasm. Its function is as follows. This regulatory protein, when combined with SAM (S-adenosylmethionine) represses the expression of the methionine regulon and of enzymes involved in SAM synthesis. This Klebsiella pneumoniae subsp. pneumoniae (strain ATCC 700721 / MGH 78578) protein is Met repressor.